We begin with the raw amino-acid sequence, 450 residues long: Keratin, type I cytoskeletal 25 (450 aa).

The interval 1–25 (MSLRLPSGSRRASPRPTTGSLRLSS) is disordered. The segment at 1 to 78 (MSLRLPSGSR…VNEGGLLSGN (78 aa)) is head. The segment at 79 to 114 (EKVTMQNLNDRLASYLENVRALEEANADLEQKIKGW) is coil 1A. The 316-residue stretch at 79 to 394 (EKVTMQNLND…LLIGGDDGAC (316 aa)) folds into the IF rod domain. The interval 115-136 (YEKFGPGSCRGLDHDYSRYFPI) is linker 1. Positions 137–228 (IEDLKNQIIA…KNHKEEMQVL (92 aa)) are coil 1B. The linker 12 stretch occupies residues 229 to 251 (QCAAGGNVNVEMNAAPGVDLTVL). Residues 252-390 (LNNMRAEYEA…ETYCLLIGGD (139 aa)) are coil 2. The interval 391 to 450 (DGACKSGGYKSKDYGAGNVGNQMKDPVKAIVVKKVLEEVDQRSKILTPRLHSLEEKSQSN) is tail. Position 442 is a phosphoserine (serine 442).

It belongs to the intermediate filament family. As to quaternary structure, heterodimer of a type I and a type II keratin. Heterodimer with type II keratin KRT5 leading to the formation of keratin intermediate filament (KIF) network. Interacts with KRT6A to form filaments.

The protein resides in the cytoplasm. Functionally, essential for the proper assembly of type I and type II keratin protein complexes and formation of keratin intermediate filaments in the inner root sheath (irs). Plays a role in the cytoskeleton organization. The polypeptide is Keratin, type I cytoskeletal 25 (Bos taurus (Bovine)).